Here is a 513-residue protein sequence, read N- to C-terminus: MRRIKIFDTTLRDGEQSPGASMSVEEKVEMALMLEDLGVDLIEAGFPVSSPVQFEAVKRVASAVQKPIVVGLARCVEKDIDAVYEALKDRPKDKRMIHVFIATSPIHRKYKLRMEKEEILERIRRYVGYAKQFFDLVEFSAEDASRTEVPFLIEAYKTAIEAGATTINVPDTVGYALPDEFGELIKTLREGVPGIENVDLSVHCHNDLGLAVANSLAAVQNGATQVEVTLNGIGERAGNCALEEFVMILKVRKDKLPYETGIKTELIYPASRLLTHITGLIPSRNKPIVGENVFLHESGIHQDGVLKHRETYEIMKPSDIGRSSETLVLGRHSGKHALRKKLESYGIKLDEETFQKVFEKFTELADRKKEVYDDDLFSIVSEVLREPINGYKLVHFHVHTGNTLLPTAAVVLQVGDEKKEAAEAGNGPVDAIFKAIDKALGIQPKLEEYIIQAVGTGKNAQGEVKLTLRINGELYSGRGVSTDIVEASAIAYINAINKYLIAKGLLRKNGGAE.

Residues 4-268 enclose the Pyruvate carboxyltransferase domain; it reads IKIFDTTLRD…ETGIKTELIY (265 aa). Mn(2+) is bound by residues D13, H203, H205, and N239. The tract at residues 392 to 513 is regulatory domain; that stretch reads KLVHFHVHTG…GLLRKNGGAE (122 aa).

This sequence belongs to the alpha-IPM synthase/homocitrate synthase family. LeuA type 1 subfamily. Homodimer. It depends on Mn(2+) as a cofactor.

The protein localises to the cytoplasm. The enzyme catalyses 3-methyl-2-oxobutanoate + acetyl-CoA + H2O = (2S)-2-isopropylmalate + CoA + H(+). It participates in amino-acid biosynthesis; L-leucine biosynthesis; L-leucine from 3-methyl-2-oxobutanoate: step 1/4. Catalyzes the condensation of the acetyl group of acetyl-CoA with 3-methyl-2-oxobutanoate (2-ketoisovalerate) to form 3-carboxy-3-hydroxy-4-methylpentanoate (2-isopropylmalate). This Thermotoga petrophila (strain ATCC BAA-488 / DSM 13995 / JCM 10881 / RKU-1) protein is 2-isopropylmalate synthase.